We begin with the raw amino-acid sequence, 159 residues long: SsrA-binding protein (159 aa).

The protein belongs to the SmpB family.

The protein localises to the cytoplasm. Its function is as follows. Required for rescue of stalled ribosomes mediated by trans-translation. Binds to transfer-messenger RNA (tmRNA), required for stable association of tmRNA with ribosomes. tmRNA and SmpB together mimic tRNA shape, replacing the anticodon stem-loop with SmpB. tmRNA is encoded by the ssrA gene; the 2 termini fold to resemble tRNA(Ala) and it encodes a 'tag peptide', a short internal open reading frame. During trans-translation Ala-aminoacylated tmRNA acts like a tRNA, entering the A-site of stalled ribosomes, displacing the stalled mRNA. The ribosome then switches to translate the ORF on the tmRNA; the nascent peptide is terminated with the 'tag peptide' encoded by the tmRNA and targeted for degradation. The ribosome is freed to recommence translation, which seems to be the essential function of trans-translation. The sequence is that of SsrA-binding protein from Coxiella burnetii (strain CbuG_Q212) (Coxiella burnetii (strain Q212)).